The chain runs to 249 residues: Thioesterase TesA (249 aa).

Active-site residues include Ser-92, Asp-196, and His-224.

The protein belongs to the thioesterase family.

It carries out the reaction a fatty acyl-CoA + H2O = a fatty acid + CoA + H(+). Its function is as follows. Involved in the synthesis of both phthiocerol dimycocerosates (PDIMs) and phenolic glycolipids (PGLs), which are structurally related lipids non-covalently bound to the outer cell wall layer of M.tuberculosis and are important virulence factors. The protein is Thioesterase TesA of Mycobacterium marinum (strain ATCC BAA-535 / M).